The sequence spans 879 residues: Beta-mannosidase (879 aa).

A signal peptide spans 1 to 17 (MLLRLLLLLAPCGAGFA). 2 N-linked (GlcNAc...) asparagine glycosylation sites follow: N35 and N77. A disulfide bridge connects residues C167 and C176. 190-192 (WDW) contacts substrate. N-linked (GlcNAc...) asparagine glycosylation is found at N297 and N302. Position 456 (N456) interacts with substrate. E457 acts as the Proton donor in catalysis. Intrachain disulfides connect C540-C629, C732-C761, and C764-C769. E554 serves as the catalytic Nucleophile. The N-linked (GlcNAc...) asparagine glycan is linked to N607. A glycan (N-linked (GlcNAc...) asparagine) is linked at N803.

Belongs to the glycosyl hydrolase 2 family. As to quaternary structure, monomer. The N-terminus is blocked. In terms of processing, N-glycosylated. As to expression, detected in kidney (at protein level). Highest expression is found in thyroid tissue. The amount of transcript is significantly higher in normal tissues than in tissues affected by the disease.

The protein localises to the lysosome. The catalysed reaction is Hydrolysis of terminal, non-reducing beta-D-mannose residues in beta-D-mannosides.. Its pathway is glycan metabolism; N-glycan degradation. Its function is as follows. Exoglycosidase that cleaves the single beta-linked mannose residue from the non-reducing end of all N-linked glycoprotein oligosaccharides. In Bos taurus (Bovine), this protein is Beta-mannosidase (MANBA).